A 161-amino-acid chain; its full sequence is 18.1 kDa class I heat shock protein (161 aa).

Residues 47-161 (ETAAFAGARI…PDVKSIQVTG (115 aa)) form the sHSP domain.

Belongs to the small heat shock protein (HSP20) family. May form oligomeric structures.

The protein localises to the cytoplasm. This is 18.1 kDa class I heat shock protein (HSP18.1) from Oryza sativa subsp. japonica (Rice).